Here is a 529-residue protein sequence, read N- to C-terminus: Bifunctional purine biosynthesis protein PurH (529 aa).

One can recognise an MGS-like domain in the interval 1 to 148 (MQQRRPVRRA…KNHKDVAIVV (148 aa)). Position 287 is an N6-acetyllysine (lysine 287).

Belongs to the PurH family.

The enzyme catalyses (6R)-10-formyltetrahydrofolate + 5-amino-1-(5-phospho-beta-D-ribosyl)imidazole-4-carboxamide = 5-formamido-1-(5-phospho-D-ribosyl)imidazole-4-carboxamide + (6S)-5,6,7,8-tetrahydrofolate. It catalyses the reaction IMP + H2O = 5-formamido-1-(5-phospho-D-ribosyl)imidazole-4-carboxamide. Its pathway is purine metabolism; IMP biosynthesis via de novo pathway; 5-formamido-1-(5-phospho-D-ribosyl)imidazole-4-carboxamide from 5-amino-1-(5-phospho-D-ribosyl)imidazole-4-carboxamide (10-formyl THF route): step 1/1. The protein operates within purine metabolism; IMP biosynthesis via de novo pathway; IMP from 5-formamido-1-(5-phospho-D-ribosyl)imidazole-4-carboxamide: step 1/1. The protein is Bifunctional purine biosynthesis protein PurH of Escherichia coli O8 (strain IAI1).